The primary structure comprises 275 residues: NAD kinase (275 aa).

The Proton acceptor role is filled by D66. Residues 66–67 (DG), 138–139 (NE), H168, D170, 181–186 (TAYNLS), and V205 each bind NAD(+).

This sequence belongs to the NAD kinase family. It depends on a divalent metal cation as a cofactor.

It is found in the cytoplasm. It carries out the reaction NAD(+) + ATP = ADP + NADP(+) + H(+). Its function is as follows. Involved in the regulation of the intracellular balance of NAD and NADP, and is a key enzyme in the biosynthesis of NADP. Catalyzes specifically the phosphorylation on 2'-hydroxyl of the adenosine moiety of NAD to yield NADP. This chain is NAD kinase, found in Halorubrum lacusprofundi (strain ATCC 49239 / DSM 5036 / JCM 8891 / ACAM 34).